An 88-amino-acid chain; its full sequence is uncharacterized protein (88 aa).

This is an uncharacterized protein from Gracula (BFDV).